We begin with the raw amino-acid sequence, 208 residues long: Large ribosomal subunit protein uL4 (208 aa).

This sequence belongs to the universal ribosomal protein uL4 family. As to quaternary structure, part of the 50S ribosomal subunit.

Functionally, one of the primary rRNA binding proteins, this protein initially binds near the 5'-end of the 23S rRNA. It is important during the early stages of 50S assembly. It makes multiple contacts with different domains of the 23S rRNA in the assembled 50S subunit and ribosome. Its function is as follows. Forms part of the polypeptide exit tunnel. The polypeptide is Large ribosomal subunit protein uL4 (Solibacter usitatus (strain Ellin6076)).